A 274-amino-acid polypeptide reads, in one-letter code: Large ribosomal subunit protein uL2 (274 aa).

The tract at residues 224 to 256 (VMNPVDHPHGGGEGKTGEGRHPVDPWGNLTKGY) is disordered. Residues 229-246 (DHPHGGGEGKTGEGRHPV) show a composition bias toward basic and acidic residues.

Belongs to the universal ribosomal protein uL2 family. In terms of assembly, part of the 50S ribosomal subunit. Forms a bridge to the 30S subunit in the 70S ribosome.

Functionally, one of the primary rRNA binding proteins. Required for association of the 30S and 50S subunits to form the 70S ribosome, for tRNA binding and peptide bond formation. It has been suggested to have peptidyltransferase activity; this is somewhat controversial. Makes several contacts with the 16S rRNA in the 70S ribosome. In Polaromonas sp. (strain JS666 / ATCC BAA-500), this protein is Large ribosomal subunit protein uL2.